A 908-amino-acid chain; its full sequence is Protein translocase subunit SecA (908 aa).

ATP is bound by residues Q87, 105 to 109 (GEGKT), and D511. Residues 559–570 (ERHESRRIDNQL) are compositionally biased toward basic and acidic residues. Disordered regions lie at residues 559–582 (ERHE…DPGS) and 841–908 (RRRR…GRLE). Over residues 847–856 (LAQQMQRAQA) the composition is skewed to low complexity. Positions 862-873 (TEEDSDAEEQAE) are enriched in acidic residues. C892, C894, C903, and H904 together coordinate Zn(2+). Residues 898 to 908 (KKYKQCHGRLE) show a composition bias toward basic residues.

The protein belongs to the SecA family. As to quaternary structure, monomer and homodimer. Part of the essential Sec protein translocation apparatus which comprises SecA, SecYEG and auxiliary proteins SecDF-YajC and YidC. It depends on Zn(2+) as a cofactor.

The protein resides in the cell inner membrane. The protein localises to the cytoplasm. The catalysed reaction is ATP + H2O + cellular proteinSide 1 = ADP + phosphate + cellular proteinSide 2.. Part of the Sec protein translocase complex. Interacts with the SecYEG preprotein conducting channel. Has a central role in coupling the hydrolysis of ATP to the transfer of proteins into and across the cell membrane, serving both as a receptor for the preprotein-SecB complex and as an ATP-driven molecular motor driving the stepwise translocation of polypeptide chains across the membrane. In Hahella chejuensis (strain KCTC 2396), this protein is Protein translocase subunit SecA.